Reading from the N-terminus, the 357-residue chain is Dehydrogenase FUB6 (357 aa).

Polar residues predominate over residues 1-17 (MGGEVSNKTWVFKQSPS). The disordered stretch occupies residues 1-22 (MGGEVSNKTWVFKQSPSGLPEP).

The protein belongs to the zinc-containing alcohol dehydrogenase family. Quinone oxidoreductase subfamily.

It functions in the pathway mycotoxin biosynthesis. In terms of biological role, dehydrogenase; part of the gene cluster that mediates the biosynthesis of fusaric acid, a mycotoxin with low to moderate toxicity to animals and humans, but with high phytotoxic properties. L-aspartate is suggested as fusaric acid amino acid precursor that is activated and further processed to O-acetyl-L-homoserine by cluster enzymes aspartate kinase FUB3 and homoserine O-acetyltransferase FUB5, as well as enzymes of the primary metabolism. The polyketide synthase (PKS) FUB1 generates the triketide trans-2-hexenal which is presumptively released by the hydrolase FUB4 and linked to the NRPS-bound amino acid precursor by NAD(P)-dependent dehydrogenase FUB6. FUB1, FUB4, and the non-canonical NRPS Fub8 may form an enzyme complex. Further processing of the NRPS-bound intermediate might be carried out by FUB6 and the O-acetylhomoserine FUB7, enabling a spontaneous electrocyclization to close the carbon backbone of fusaric acid. Dihydrofusaric acid is likely to be released via reduction by the thioester reductase (TR) domain of FUB8 whereupon the final oxidation to fusaric acid may (also) be performed by the FMN-dependent dehydrogenase FUB9. This chain is Dehydrogenase FUB6, found in Fusarium oxysporum f. sp. lycopersici (strain 4287 / CBS 123668 / FGSC 9935 / NRRL 34936) (Fusarium vascular wilt of tomato).